We begin with the raw amino-acid sequence, 329 residues long: Lipoyl synthase (329 aa).

Residues Cys-55, Cys-60, Cys-66, Cys-81, Cys-85, Cys-88, and Ser-292 each coordinate [4Fe-4S] cluster. Residues 67–281 enclose the Radical SAM core domain; the sequence is WEDREATFLI…RDEAEAIGFL (215 aa).

The protein belongs to the radical SAM superfamily. Lipoyl synthase family. It depends on [4Fe-4S] cluster as a cofactor.

The protein resides in the cytoplasm. The catalysed reaction is [[Fe-S] cluster scaffold protein carrying a second [4Fe-4S](2+) cluster] + N(6)-octanoyl-L-lysyl-[protein] + 2 oxidized [2Fe-2S]-[ferredoxin] + 2 S-adenosyl-L-methionine + 4 H(+) = [[Fe-S] cluster scaffold protein] + N(6)-[(R)-dihydrolipoyl]-L-lysyl-[protein] + 4 Fe(3+) + 2 hydrogen sulfide + 2 5'-deoxyadenosine + 2 L-methionine + 2 reduced [2Fe-2S]-[ferredoxin]. It participates in protein modification; protein lipoylation via endogenous pathway; protein N(6)-(lipoyl)lysine from octanoyl-[acyl-carrier-protein]: step 2/2. Catalyzes the radical-mediated insertion of two sulfur atoms into the C-6 and C-8 positions of the octanoyl moiety bound to the lipoyl domains of lipoate-dependent enzymes, thereby converting the octanoylated domains into lipoylated derivatives. The polypeptide is Lipoyl synthase (Leifsonia xyli subsp. xyli (strain CTCB07)).